A 57-amino-acid chain; its full sequence is uncharacterized protein (57 aa).

This is an uncharacterized protein from Bacillus phage phi105 (Bacteriophage phi-105).